The sequence spans 280 residues: PsbP domain-containing protein 7, chloroplastic (280 aa).

Residues 1–36 (MSLKPYFSLLYSSPTNVKLSNFLIAQQPSGDLKTTP) constitute a chloroplast transit peptide.

This sequence belongs to the PsbP family.

It is found in the plastid. The protein localises to the chloroplast. This chain is PsbP domain-containing protein 7, chloroplastic (PPD7), found in Arabidopsis thaliana (Mouse-ear cress).